The sequence spans 284 residues: Bifunctional protein FolD (284 aa).

NADP(+)-binding positions include 165 to 167 and Ser190; that span reads GRS.

It belongs to the tetrahydrofolate dehydrogenase/cyclohydrolase family. In terms of assembly, homodimer.

The catalysed reaction is (6R)-5,10-methylene-5,6,7,8-tetrahydrofolate + NADP(+) = (6R)-5,10-methenyltetrahydrofolate + NADPH. It carries out the reaction (6R)-5,10-methenyltetrahydrofolate + H2O = (6R)-10-formyltetrahydrofolate + H(+). It functions in the pathway one-carbon metabolism; tetrahydrofolate interconversion. Catalyzes the oxidation of 5,10-methylenetetrahydrofolate to 5,10-methenyltetrahydrofolate and then the hydrolysis of 5,10-methenyltetrahydrofolate to 10-formyltetrahydrofolate. In Streptococcus agalactiae serotype Ia (strain ATCC 27591 / A909 / CDC SS700), this protein is Bifunctional protein FolD.